We begin with the raw amino-acid sequence, 193 residues long: Probable thymidylate kinase (193 aa).

Position 7-14 (7-14) interacts with ATP; sequence GIDGSGKT.

This sequence belongs to the thymidylate kinase family.

It carries out the reaction dTMP + ATP = dTDP + ADP. The polypeptide is Probable thymidylate kinase (Pyrobaculum calidifontis (strain DSM 21063 / JCM 11548 / VA1)).